Here is a 955-residue protein sequence, read N- to C-terminus: Eukaryotic translation initiation factor 3 subunit C (955 aa).

2 disordered regions span residues 1-22 and 157-299; these read MSRF…SEPV and RAAP…EEGW. Residues 162–183 show a composition bias toward acidic residues; sequence DFAEEEEDDEREDEKGSDEEEE. Over residues 206–218 the composition is skewed to low complexity; that stretch reads VKPVADSDSSDWG. Positions 219 to 229 are enriched in acidic residues; it reads SDSDSDSTSSD. Residues 230–250 show a composition bias toward basic and acidic residues; it reads EDAKYTSIRDRFLKKPEKGTE. Acidic residues predominate over residues 288 to 297; it reads MFDENEEEEE. One can recognise a PCI domain in the interval 658–834; the sequence is FHMHINLELL…ETIVMHRSEP (177 aa). Residues 865-955 form a disordered region; sequence NFFQRGGNQG…RNVEYQNKAE (91 aa). The span at 882–894 shows a compositional bias: low complexity; that stretch reads YRNQNQNQNWNNN. The span at 911–955 shows a compositional bias: basic and acidic residues; the sequence is GEGREQREHHRDHHRDQREHREHQNREFREQREQMRNVEYQNKAE.

It belongs to the eIF-3 subunit C family. As to quaternary structure, component of the eukaryotic translation initiation factor 3 (eIF-3) complex.

The protein resides in the cytoplasm. Functionally, component of the eukaryotic translation initiation factor 3 (eIF-3) complex, which is involved in protein synthesis of a specialized repertoire of mRNAs and, together with other initiation factors, stimulates binding of mRNA and methionyl-tRNAi to the 40S ribosome. The eIF-3 complex specifically targets and initiates translation of a subset of mRNAs involved in cell proliferation. The protein is Eukaryotic translation initiation factor 3 subunit C of Anopheles gambiae (African malaria mosquito).